We begin with the raw amino-acid sequence, 625 residues long: MSFQCSSRSLCRSGGGGGGRNFSSGSAGLVSFQRRSTSSSMRRSGGGGGGRFSGGGFCGSSGGGFGSKSLVNLGGGRSISISVAGGGSSYGGGFGGGSYGGGSFGGGSFGGGVGGGFGGGGFGGGGFGSGGGFGGGRFGGGFGPVCPPGGIQEVTINQSLLQPLNVEVDPQIQKVKSQEREQIKSLNDKFASFIDKVRFLEQQNQVLQTKWELLQQVDTSTRTQNLDPFFESYISNLRRQVDSLKNDQSRMDSELKNMQDLVEEYRTKYEDEINKRTNAENEFVTIKKDVDSAYMNKAELQARVDNLQQDIDFFSTLYQMELSQMQTQISETNVVLSMDNNRTLDLDGIIAEVKAQYDSICQRSKAEAETFYQSKYEELQITAGKHGDSVKNTKMEISELNRVIQRLRSEIDSVKKQISQMQQNISDAEQRGEKALKDAQNKLNEIEDALTQAKEELTRLLRDYQELMNTKLALDMEIATYRKLLEGEEIRMSGECTPNVSVSVSTSHTSMSGTSSRGGGRYGSGGGGGGGTYGGGSRGGSYGGGSGGGSYGGCSSGGGSGGGSYGGGSSGGHRGGSGGGGGSSGGSYGGSSGGGRGGSSSGGGVKSSGSSSVKFVSTTYSRGTN.

Positions 1–12 are enriched in low complexity; sequence MSFQCSSRSLCR. The segment at 1–27 is disordered; it reads MSFQCSSRSLCRSGGGGGGRNFSSGSA. The interval 1-178 is head; it reads MSFQCSSRSL…DPQIQKVKSQ (178 aa). Arg12 carries the omega-N-methylarginine modification. Phosphoserine is present on residues Ser23 and Ser26. Arg51 bears the Omega-N-methylarginine mark. Residue Ser69 is modified to Phosphoserine. A coiled-coil region spans residues 171–319; sequence QIQKVKSQER…DIDFFSTLYQ (149 aa). The coil 1A stretch occupies residues 179-214; the sequence is EREQIKSLNDKFASFIDKVRFLEQQNQVLQTKWELL. The 314-residue stretch at 179–492 folds into the IF rod domain; it reads EREQIKSLND…KLLEGEEIRM (314 aa). The segment at 215-233 is linker 1; the sequence is QQVDTSTRTQNLDPFFESY. The tract at residues 234 to 325 is coil 1B; that stretch reads ISNLRRQVDS…TLYQMELSQM (92 aa). Lys275 carries the post-translational modification N6,N6-dimethyllysine. Residues 326-349 form a linker 12 region; it reads QTQISETNVVLSMDNNRTLDLDGI. The segment at 350–488 is coil 2; that stretch reads IAEVKAQYDS…ATYRKLLEGE (139 aa). Residues 388 to 475 adopt a coiled-coil conformation; it reads DSVKNTKMEI…ELMNTKLALD (88 aa). The interval 489-625 is tail; sequence EIRMSGECTP…VSTTYSRGTN (137 aa). 2 disordered regions span residues 496–525 and 560–625; these read CTPNVSVSVSTSHTSMSGTSSRGGGRYGSG and SGGG…RGTN. Residues 500–515 show a composition bias toward low complexity; it reads VSVSVSTSHTSMSGTS. Composition is skewed to gly residues over residues 516–525 and 560–606; these read SRGGGRYGSG and SGGG…GGVK. Omega-N-methylarginine is present on residues Arg517, Arg574, and Arg596. Polar residues predominate over residues 613-625; that stretch reads VKFVSTTYSRGTN.

It belongs to the intermediate filament family. As to quaternary structure, heterotetramer of two type I and two type II keratins. Heterodimer with KRT10. Two heterodimers of KRT1 and KRT10 form a heterotetramer. Forms a heterodimer with KRT14; the interaction is more abundant in the absence of KRT5. Interacts with ITGB1 in the presence of RACK1 and SRC, and with RACK1. Interacts with C1QBP; the association represents a cell surface kininogen receptor. Interacts with EPPK1; interaction is dependent of higher-order structure of intermediate filament. In terms of processing, undergoes deimination of some arginine residues (citrullination).

The protein localises to the cell membrane. Its subcellular location is the cytoplasm. In terms of biological role, may regulate the activity of kinases such as PKC and SRC via binding to integrin beta-1 (ITB1) and the receptor of activated protein C kinase 1 (RACK1). In complex with C1QBP is a high affinity receptor for kininogen-1/HMWK. This Rattus norvegicus (Rat) protein is Keratin, type II cytoskeletal 1.